The chain runs to 121 residues: Large ribosomal subunit protein bL21 (121 aa).

It belongs to the bacterial ribosomal protein bL21 family. Part of the 50S ribosomal subunit. Contacts protein L20.

This protein binds to 23S rRNA in the presence of protein L20. The polypeptide is Large ribosomal subunit protein bL21 (Synechococcus sp. (strain CC9605)).